The primary structure comprises 197 residues: Holliday junction branch migration complex subunit RuvA (197 aa).

Residues 1–64 (MIASVRGVVQ…EDMLALFGFS (64 aa)) form a domain I region. The domain II stretch occupies residues 65–143 (SPAQRALFEL…VATISPQLST (79 aa)). The segment at 144–153 (NPGLLALNTE) is flexible linker. The segment at 153–197 (ELIDILTSLGYSTTEAQAALNALPADAPADTEERLRLALQYFGGV) is domain III.

Belongs to the RuvA family. In terms of assembly, homotetramer. Forms an RuvA(8)-RuvB(12)-Holliday junction (HJ) complex. HJ DNA is sandwiched between 2 RuvA tetramers; dsDNA enters through RuvA and exits via RuvB. An RuvB hexamer assembles on each DNA strand where it exits the tetramer. Each RuvB hexamer is contacted by two RuvA subunits (via domain III) on 2 adjacent RuvB subunits; this complex drives branch migration. In the full resolvosome a probable DNA-RuvA(4)-RuvB(12)-RuvC(2) complex forms which resolves the HJ.

It is found in the cytoplasm. In terms of biological role, the RuvA-RuvB-RuvC complex processes Holliday junction (HJ) DNA during genetic recombination and DNA repair, while the RuvA-RuvB complex plays an important role in the rescue of blocked DNA replication forks via replication fork reversal (RFR). RuvA specifically binds to HJ cruciform DNA, conferring on it an open structure. The RuvB hexamer acts as an ATP-dependent pump, pulling dsDNA into and through the RuvAB complex. HJ branch migration allows RuvC to scan DNA until it finds its consensus sequence, where it cleaves and resolves the cruciform DNA. This chain is Holliday junction branch migration complex subunit RuvA, found in Herpetosiphon aurantiacus (strain ATCC 23779 / DSM 785 / 114-95).